The chain runs to 189 residues: Holliday junction branch migration complex subunit RuvA (189 aa).

The domain I stretch occupies residues M1 to S63. A domain II region spans residues D64–D135. Residues D135–T139 are flexible linker. The segment at E140–R189 is domain III.

It belongs to the RuvA family. As to quaternary structure, homotetramer. Forms an RuvA(8)-RuvB(12)-Holliday junction (HJ) complex. HJ DNA is sandwiched between 2 RuvA tetramers; dsDNA enters through RuvA and exits via RuvB. An RuvB hexamer assembles on each DNA strand where it exits the tetramer. Each RuvB hexamer is contacted by two RuvA subunits (via domain III) on 2 adjacent RuvB subunits; this complex drives branch migration. In the full resolvosome a probable DNA-RuvA(4)-RuvB(12)-RuvC(2) complex forms which resolves the HJ.

It localises to the cytoplasm. Its function is as follows. The RuvA-RuvB-RuvC complex processes Holliday junction (HJ) DNA during genetic recombination and DNA repair, while the RuvA-RuvB complex plays an important role in the rescue of blocked DNA replication forks via replication fork reversal (RFR). RuvA specifically binds to HJ cruciform DNA, conferring on it an open structure. The RuvB hexamer acts as an ATP-dependent pump, pulling dsDNA into and through the RuvAB complex. HJ branch migration allows RuvC to scan DNA until it finds its consensus sequence, where it cleaves and resolves the cruciform DNA. This is Holliday junction branch migration complex subunit RuvA from Thermosipho melanesiensis (strain DSM 12029 / CIP 104789 / BI429).